The primary structure comprises 533 residues: Calcium-dependent protein kinase 12 (533 aa).

Residues 1 to 77 (MGNCFTKTYE…RASGGGGEMG (77 aa)) are disordered. Residue glycine 2 is the site of N-myristoyl glycine attachment. The span at 26-38 (ERSKARGGDEPGT) shows a compositional bias: basic and acidic residues. Over residues 57-69 (GSSSAAGALSRRA) the composition is skewed to low complexity. One can recognise a Protein kinase domain in the interval 91–349 (YQLDRKLGSG…ASQALEHRWL (259 aa)). ATP contacts are provided by residues 97-105 (LGSGQFGTT) and lysine 120. Catalysis depends on aspartate 215, which acts as the Proton acceptor. Residues 354-384 (ASDRPIDSAVLSRMKQFKAMNKLKQLALKVI) are autoinhibitory domain. EF-hand domains lie at 391–426 (EEIK…LGSR), 427–462 (ISEA…KHKL), 463–498 (EKEE…YGMG), and 499–533 (DEAN…GIQT). Ca(2+) contacts are provided by aspartate 404, aspartate 406, serine 408, threonine 410, glutamate 415, aspartate 440, aspartate 442, serine 444, serine 446, glutamate 451, aspartate 476, aspartate 478, serine 480, tyrosine 482, glutamate 487, aspartate 511, aspartate 513, aspartate 515, arginine 517, and glutamate 522.

The protein belongs to the protein kinase superfamily. Ser/Thr protein kinase family. CDPK subfamily. In terms of tissue distribution, expressed in roots, leaf blades and developing seeds. Expressed in vascular tissues of roots and leaf blades. Expressed in the phloem tissue of the large vascular bundle in leaf blades.

It is found in the membrane. The enzyme catalyses L-seryl-[protein] + ATP = O-phospho-L-seryl-[protein] + ADP + H(+). It catalyses the reaction L-threonyl-[protein] + ATP = O-phospho-L-threonyl-[protein] + ADP + H(+). Activated by calcium. Autophosphorylation may play an important role in the regulation of the kinase activity. In terms of biological role, may play a role in signal transduction pathways that involve calcium as a second messenger. Functions in signal transduction pathways that positively regulate responses to low-nitrogen. Functions in multiple signaling pathways, positively regulating salt tolerance and negatively modulating rice blast fungus resistance. May promote tolerance to salt stress by negatively regulating NADPH oxidase and positively regulating reactive oxygen species (ROS) scavengers. In Oryza sativa subsp. japonica (Rice), this protein is Calcium-dependent protein kinase 12.